We begin with the raw amino-acid sequence, 42 residues long: Large ribosomal subunit protein bL36 (42 aa).

This sequence belongs to the bacterial ribosomal protein bL36 family.

This is Large ribosomal subunit protein bL36 from Ehrlichia canis (strain Jake).